The following is a 343-amino-acid chain: Isopentenyl-diphosphate delta-isomerase (343 aa).

A substrate-binding site is contributed by 6 to 7 (RK). Residues Ser63, 64 to 66 (SMT), Ser94, and Asn122 each bind FMN. 94–96 (SMR) contacts substrate. Position 157 (Gln157) interacts with substrate. Glu158 provides a ligand contact to Mg(2+). FMN-binding positions include Lys189, Thr219, 269 to 271 (GLK), and 290 to 291 (AG).

Belongs to the IPP isomerase type 2 family. As to quaternary structure, homooctamer. Dimer of tetramers. FMN is required as a cofactor. NADPH serves as cofactor. The cofactor is Mg(2+).

The protein localises to the cytoplasm. The catalysed reaction is isopentenyl diphosphate = dimethylallyl diphosphate. Functionally, involved in the biosynthesis of isoprenoids. Catalyzes the 1,3-allylic rearrangement of the homoallylic substrate isopentenyl (IPP) to its allylic isomer, dimethylallyl diphosphate (DMAPP). This Rickettsia bellii (strain OSU 85-389) protein is Isopentenyl-diphosphate delta-isomerase.